Here is a 265-residue protein sequence, read N- to C-terminus: Cytochrome c oxidase subunit 3 (265 aa).

7 helical membrane passes run 16-36, 41-61, 85-105, 138-158, 162-182, 200-220, and 242-262; these read PWPL…VMYM, GGGT…FVWW, GIIL…WAFF, LILL…LAGL, AVYA…FQGI, FFLA…FLII, and AFYW…IYWW.

Belongs to the cytochrome c oxidase subunit 3 family. Component of the cytochrome c oxidase (complex IV, CIV), a multisubunit enzyme composed of a catalytic core of 3 subunits and several supernumerary subunits. The complex exists as a monomer or a dimer and forms supercomplexes (SCs) in the inner mitochondrial membrane with ubiquinol-cytochrome c oxidoreductase (cytochrome b-c1 complex, complex III, CIII).

Its subcellular location is the mitochondrion inner membrane. It carries out the reaction 4 Fe(II)-[cytochrome c] + O2 + 8 H(+)(in) = 4 Fe(III)-[cytochrome c] + 2 H2O + 4 H(+)(out). Functionally, component of the cytochrome c oxidase, the last enzyme in the mitochondrial electron transport chain which drives oxidative phosphorylation. The respiratory chain contains 3 multisubunit complexes succinate dehydrogenase (complex II, CII), ubiquinol-cytochrome c oxidoreductase (cytochrome b-c1 complex, complex III, CIII) and cytochrome c oxidase (complex IV, CIV), that cooperate to transfer electrons derived from NADH and succinate to molecular oxygen, creating an electrochemical gradient over the inner membrane that drives transmembrane transport and the ATP synthase. Cytochrome c oxidase is the component of the respiratory chain that catalyzes the reduction of oxygen to water. Electrons originating from reduced cytochrome c in the intermembrane space (IMS) are transferred via the dinuclear copper A center (CU(A)) of subunit 2 and heme A of subunit 1 to the active site in subunit 1, a binuclear center (BNC) formed by heme A3 and copper B (CU(B)). The BNC reduces molecular oxygen to 2 water molecules using 4 electrons from cytochrome c in the IMS and 4 protons from the mitochondrial matrix. This chain is Cytochrome c oxidase subunit 3 (COX3), found in Marchantia polymorpha (Common liverwort).